Reading from the N-terminus, the 121-residue chain is Large ribosomal subunit protein uL18 (121 aa).

Residues 1–25 are disordered; that stretch reads MKIVISKPDKNKIRQKRHRRVRGKL. Over residues 13-23 the composition is skewed to basic residues; sequence IRQKRHRRVRG.

The protein belongs to the universal ribosomal protein uL18 family. Part of the 50S ribosomal subunit; part of the 5S rRNA/L5/L18/L25 subcomplex. Contacts the 5S and 23S rRNAs.

This is one of the proteins that bind and probably mediate the attachment of the 5S RNA into the large ribosomal subunit, where it forms part of the central protuberance. In Streptococcus pyogenes serotype M28 (strain MGAS6180), this protein is Large ribosomal subunit protein uL18.